Reading from the N-terminus, the 445-residue chain is Protein phosphatase 2C 53 (445 aa).

Residues 124 to 435 form the PPM-type phosphatase domain; the sequence is LWGLESICGR…DNITVVVIDL (312 aa). Mn(2+)-binding residues include aspartate 180, glycine 181, aspartate 362, and aspartate 426.

Belongs to the PP2C family. As to quaternary structure, interacts with PYL10, SAPK8 and SAPK10. Binding to PYL10 is dependent on the presence of abscisic acid (ABA). Interacts with PYL3, PYL5, PYL9 and PYL10. Binding to PYL9 and PYL10 is dependent on the presence of ABA. Mg(2+) serves as cofactor. Requires Mn(2+) as cofactor. In terms of tissue distribution, expressed in leaf blades, leaf sheaths and lamina joints. Expressed at low levels in roots, stems, flowers and panicles.

It localises to the cytoplasm. The protein resides in the cytosol. Its subcellular location is the nucleus. It catalyses the reaction O-phospho-L-seryl-[protein] + H2O = L-seryl-[protein] + phosphate. It carries out the reaction O-phospho-L-threonyl-[protein] + H2O = L-threonyl-[protein] + phosphate. Its activity is regulated as follows. Repressed by abscisic acid-bound PYL1. Protein phosphatase that acts as a negative regulator of abscisic acid (ABA) signaling. Involved in the regulation of root architecture development and drought resistance. Can dephosphorylate SAPK8 and SAPK10 in vitro. Together with PYL10, SAPK8 and SAPK10, may form an ABA signaling module involved in stress response. The sequence is that of Protein phosphatase 2C 53 from Oryza sativa subsp. japonica (Rice).